The following is a 2407-amino-acid chain: Daf-12-interacting protein 1 (2407 aa).

Over residues 90-112 (QNSSMASMSSTPSSGQSSSPRNA) the composition is skewed to low complexity. Residues 90–152 (QNSSMASMSS…PHLSVQSQQR (63 aa)) are disordered. Positions 277–335 (CSVHVPHLDRHSPDHYRRRFESYGQVIDVDMVKSNDNKAFAVVQFTNIDDAQKALQDTN) constitute an RRM domain. 11 disordered regions span residues 439 to 632 (EVAA…LELD), 737 to 767 (ATDSKELGRDQPAGGRTSGRPSLDESRTNRL), 785 to 849 (LCIG…GRPA), 874 to 896 (PTHDEMMAPRGTPPSRRSSETMV), 921 to 986 (LIAA…PSNA), 993 to 1012 (RSQSMTSGDPKKSAPSTPVV), 1025 to 1844 (SNQP…EDSE), 1858 to 1918 (IAQE…VNNH), 1932 to 1976 (LQPA…QQSD), 2077 to 2103 (EENERKVEEDRREKQRKEEERQRLAAA), and 2172 to 2200 (SIQRPSSTASTSSNPPKAPLQPSASVNQN). A compositionally biased stretch (polar residues) spans 443–456 (RSSSPTSKSENDQG). Residues 512–529 (EDSDEQNDVDEEDDEDVV) are compositionally biased toward acidic residues. 3 stretches are compositionally biased toward basic and acidic residues: residues 530–541 (SEEKRHEPEEGK), 548–564 (GHRDESNGDKDHEDSSE), and 573–586 (SHHETSHSPEKDSE). Polar residues predominate over residues 587 to 603 (AYQSRSFSPLNYQSQSP). The segment covering 618-627 (SPTTSSASSS) has biased composition (low complexity). Polar residues-rich tracts occupy residues 791–826 (TPSTPFPTSQPLLVNTTHLPGTSQPSTSGGITTPRS) and 837–849 (SRHNSMSSTGRPA). Over residues 924–946 (ATSTGTHSVSSSAHSTPRHSISG) the composition is skewed to polar residues. Residues 966-978 (SRPEKVQIRHDTI) show a composition bias toward basic and acidic residues. Residues 1043 to 1052 (SALQNIQNHQ) are compositionally biased toward polar residues. Residues 1053–1070 (PPHSNANSTPSTPSTSTH) show a composition bias toward low complexity. Basic and acidic residues predominate over residues 1086-1153 (KEKEEREREA…KVRKKAEKEK (68 aa)). The span at 1165–1177 (SDESDSDSNDELD) shows a compositional bias: acidic residues. 6 stretches are compositionally biased toward basic and acidic residues: residues 1178 to 1195 (LDVRKSTKEMTQEEKDHQ), 1218 to 1227 (RAHDSFEKMQ), 1279 to 1293 (ADQRLKVLKEREKGE), 1304 to 1320 (NDAGEIHQQRLTEDREN), 1335 to 1355 (QGERKNVPKRMRRDDSEDAAA), and 1376 to 1398 (RRSSEDESKKNAKRDFRDIPHED). Composition is skewed to low complexity over residues 1456–1471 (PKHLSPKTSTSSTKRS) and 1488–1498 (TTSSTSTATTS). Residues 1534-1547 (SMNSAADSPMSTTG) show a composition bias toward polar residues. The span at 1570-1595 (SSSGQHDSSSGSSSDSSSSDGSTSSD) shows a compositional bias: low complexity. Composition is skewed to basic and acidic residues over residues 1679–1691 (SEEHEDSHEHGDS) and 1703–1726 (EHQEEKEELENKILDVAAEHHEEQ). Residues 1749–1770 (TQAQEKSAHTLISDQETDQAVQ) show a composition bias toward polar residues. Positions 1792-1805 (NEKEVSGKDPHNIK) are enriched in basic and acidic residues. Residues 1809–1826 (PLNNGHTDLLFSPSSSAH) are compositionally biased toward polar residues. 2 stretches are compositionally biased toward basic and acidic residues: residues 1827–1836 (ASEKQSTKSE) and 1873–1892 (EEVKLETSPVPKEEPIKMEE). 2 stretches are compositionally biased toward polar residues: residues 1895–1911 (EQTPTPDLISNNESQDT) and 1932–1942 (LQPASQHQVAQ). Positions 1962 to 1975 (SQQSQPSPMSSQQS) are enriched in low complexity. The stretch at 2049 to 2110 (NQMMQAKMKQ…AAATAAATMA (62 aa)) forms a coiled coil. Over residues 2077 to 2099 (EENERKVEEDRREKQRKEEERQR) the composition is skewed to basic and acidic residues. The segment covering 2176–2186 (PSSTASTSSNP) has biased composition (low complexity). Residues 2213–2383 (QRWFYKHFPM…TRYLLIVFTN (171 aa)) form the SPOC domain.

Isoform d interacts with daf-12. Isoform d is widely expressed: detected in the hypodermis, seam cells, intestine, somatic gonad, neurons, vulval precursors, body wall muscle and pharynx.

It localises to the nucleus. Probable transcriptional corepressor which modulates activity of the nuclear hormone receptor daf-12 to regulate the dauer diapause. The sequence is that of Daf-12-interacting protein 1 from Caenorhabditis elegans.